The following is a 397-amino-acid chain: P2X purinoceptor 3 (397 aa).

The Cytoplasmic portion of the chain corresponds to 1–20 (MNCISDFFTYETTKSVVVKS). The chain crosses the membrane as a helical span at residues 21-43 (WTIGIINRAVQLLIISYFVGWVF). Residues 44–322 (LHEKAYQVRD…AGKFNIIPTI (279 aa)) are Extracellular-facing. Residues Lys63 and Lys65 each coordinate ATP. Intrachain disulfides connect Cys107–Cys153, Cys116–Cys137, and Cys122–Cys147. Residue Glu111 coordinates Mg(2+). A glycan (N-linked (GlcNAc...) asparagine) is linked at Asn139. Mg(2+) is bound at residue Asp158. Asp158 is a Ca(2+) binding site. Asn170 carries N-linked (GlcNAc...) asparagine glycosylation. Thr172 contributes to the ATP binding site. Asn194 carries N-linked (GlcNAc...) asparagine glycosylation. Cystine bridges form between Cys203–Cys213 and Cys247–Cys256. The ATP site is built by Ser275, Asn279, and Arg281. Asn290 is a glycosylation site (N-linked (GlcNAc...) asparagine). Lys299 serves as a coordination point for ATP. Residues 323–341 (ISSVAAFTSVGVGTVLCDI) form a helical membrane-spanning segment. Residues 342–397 (ILLNFLKGADHYKARKFEEVTETTLKGTASTNPVFASDQATVEKQSTDSGAYSIGH) lie on the Cytoplasmic side of the membrane.

This sequence belongs to the P2X receptor family. Homotrimer. Forms heterotrimer with P2RX2. Heterotrimeric P2RX2/3 has a ligand dose-response profile that is distinct from either homotrimeric P2RX2 or P2RX3. Selectively expressed in sensory ganglia.

Its subcellular location is the cell membrane. The catalysed reaction is Ca(2+)(in) = Ca(2+)(out). It catalyses the reaction Na(+)(in) = Na(+)(out). With respect to regulation, has high sensitivity to ATP. Fast activation by external ATP. Exhibits rapid desensitization. Sensitives to the ATP agonist:alpha/beta-methylene-ATP. Subject to allosteric inhibition by AF-219. Mg(2+) and Ca(2+) slow deactivation of P2RX3. Extracellular ATP-activated non-selective cation channel. Plays particularly important role in sensory neurons where its activation is critical for gustatory, nociceptive responses, visceral reflexes and sensory hypersensitization. This is P2X purinoceptor 3 (P2rx3) from Rattus norvegicus (Rat).